The primary structure comprises 576 residues: Protein HYPER-SENSITIVITY-RELATED 4 (576 aa).

A helical transmembrane segment spans residues 55–75; sequence LATAKTVLTTAASVAATAMLA. Residue 306–313 coordinates ATP; it reads GPPGTGKS. Residues 508 to 532 are disordered; that stretch reads DKAKTEKQELENKKKTKEGTDSVVK.

Belongs to the AAA ATPase family. BCS1 subfamily. In terms of assembly, binds to the Yariv phenylglycoside (beta-D-Glc)(3). Requires Mg(2+) as cofactor.

The protein resides in the membrane. It carries out the reaction ATP + H2O = ADP + phosphate + H(+). This Arabidopsis thaliana (Mouse-ear cress) protein is Protein HYPER-SENSITIVITY-RELATED 4.